The chain runs to 197 residues: Probable nicotinate-nucleotide adenylyltransferase (197 aa).

This sequence belongs to the NadD family.

It catalyses the reaction nicotinate beta-D-ribonucleotide + ATP + H(+) = deamido-NAD(+) + diphosphate. The protein operates within cofactor biosynthesis; NAD(+) biosynthesis; deamido-NAD(+) from nicotinate D-ribonucleotide: step 1/1. Catalyzes the reversible adenylation of nicotinate mononucleotide (NaMN) to nicotinic acid adenine dinucleotide (NaAD). In Thermosipho melanesiensis (strain DSM 12029 / CIP 104789 / BI429), this protein is Probable nicotinate-nucleotide adenylyltransferase.